Consider the following 462-residue polypeptide: Protoheme IX farnesyltransferase, mitochondrial (462 aa).

7 consecutive transmembrane segments (helical) span residues 152–172 (LTILVTLSSICSYAISPYTVS), 173–193 (LPELLFLTMGTALCSGAANAI), 237–257 (MLFLGVNPTVSFLGFLNIVLY), 269–289 (IINTWVGAIVGAIPPLMGWAA), 296–316 (PGAWCLAGLLYAWQFPHFNAL), 348–368 (SLLMFPLCFGLSYFGITDWVF), and 411–431 (AKKLFWGSVWHLPAVLILAML).

It belongs to the UbiA prenyltransferase family.

Its subcellular location is the mitochondrion membrane. Converts protoheme IX and farnesyl diphosphate to heme O. In Debaryomyces hansenii (strain ATCC 36239 / CBS 767 / BCRC 21394 / JCM 1990 / NBRC 0083 / IGC 2968) (Yeast), this protein is Protoheme IX farnesyltransferase, mitochondrial (COX10).